Consider the following 276-residue polypeptide: Glutamate 5-kinase (276 aa).

Residue K14 coordinates ATP. S54, D141, and N157 together coordinate substrate. Residues 177–178 and 219–225 contribute to the ATP site; these read SD and TGGMLTK.

The protein belongs to the glutamate 5-kinase family.

Its subcellular location is the cytoplasm. It catalyses the reaction L-glutamate + ATP = L-glutamyl 5-phosphate + ADP. It participates in amino-acid biosynthesis; L-proline biosynthesis; L-glutamate 5-semialdehyde from L-glutamate: step 1/2. In terms of biological role, catalyzes the transfer of a phosphate group to glutamate to form L-glutamate 5-phosphate. The polypeptide is Glutamate 5-kinase (Listeria monocytogenes serotype 4a (strain HCC23)).